Consider the following 296-residue polypeptide: 4-hydroxybenzoate octaprenyltransferase (296 aa).

Transmembrane regions (helical) follow at residues 28-48, 52-72, 102-122, 146-166, 169-189, 219-239, 241-261, and 275-295; these read PIGI…AAEG, LSHV…GCAI, ALIL…CTNA, YYPQ…TFTA, GELP…TVGY, VIIL…GARF, LGGW…WEFW, and FLHN…DYAL.

Belongs to the UbiA prenyltransferase family. Mg(2+) is required as a cofactor.

The protein resides in the cell inner membrane. It catalyses the reaction all-trans-octaprenyl diphosphate + 4-hydroxybenzoate = 4-hydroxy-3-(all-trans-octaprenyl)benzoate + diphosphate. It functions in the pathway cofactor biosynthesis; ubiquinone biosynthesis. Catalyzes the prenylation of para-hydroxybenzoate (PHB) with an all-trans polyprenyl group. Mediates the second step in the final reaction sequence of ubiquinone-8 (UQ-8) biosynthesis, which is the condensation of the polyisoprenoid side chain with PHB, generating the first membrane-bound Q intermediate 3-octaprenyl-4-hydroxybenzoate. The polypeptide is 4-hydroxybenzoate octaprenyltransferase (Pseudomonas fluorescens (strain ATCC BAA-477 / NRRL B-23932 / Pf-5)).